A 185-amino-acid chain; its full sequence is Large ribosomal subunit protein uL5 (185 aa).

This sequence belongs to the universal ribosomal protein uL5 family. Part of the 50S ribosomal subunit; part of the 5S rRNA/L5/L18/L25 subcomplex. Contacts the 5S rRNA and the P site tRNA. Forms a bridge to the 30S subunit in the 70S ribosome.

Its function is as follows. This is one of the proteins that bind and probably mediate the attachment of the 5S RNA into the large ribosomal subunit, where it forms part of the central protuberance. In the 70S ribosome it contacts protein S13 of the 30S subunit (bridge B1b), connecting the 2 subunits; this bridge is implicated in subunit movement. Contacts the P site tRNA; the 5S rRNA and some of its associated proteins might help stabilize positioning of ribosome-bound tRNAs. This is Large ribosomal subunit protein uL5 from Bradyrhizobium diazoefficiens (strain JCM 10833 / BCRC 13528 / IAM 13628 / NBRC 14792 / USDA 110).